Consider the following 986-residue polypeptide: Translation initiation factor IF-2 (986 aa).

Residues 75–94 show a composition bias toward basic and acidic residues; that stretch reads KRLSRLEEQSRKTYEKEQHL. Disordered stretches follow at residues 75–105, 127–148, 185–258, and 277–394; these read KRLS…APPL, PPSK…PDAP, SEVP…VSFD, and GRHK…HEED. 2 stretches are compositionally biased toward low complexity: residues 185 to 210 and 218 to 235; these read SEVP…ESPL and SEPQ…LPEI. A compositionally biased stretch (basic and acidic residues) spans 292-313; sequence DALKDEFEPKPAEESRVEEKVV. The segment covering 315-338 has biased composition (low complexity); sequence AKKPPVKAAADVKPKPVVADSSSS. Positions 339–348 are enriched in basic residues; the sequence is AKKKGKKKKK. The tr-type G domain occupies 483 to 653; sequence TRPPVVTIMG…LTEAEMRELR (171 aa). The segment at 492-499 is G1; it reads GHVDHGKT. 492-499 is a binding site for GTP; the sequence is GHVDHGKT. Positions 517 to 521 are G2; sequence GITQH. Residues 539 to 542 form a G3 region; it reads DTPG. GTP-binding positions include 539–543 and 593–596; these read DTPGH and NKID. The segment at 593–596 is G4; that stretch reads NKID. Residues 629–631 form a G5 region; the sequence is SAK.

Belongs to the TRAFAC class translation factor GTPase superfamily. Classic translation factor GTPase family. IF-2 subfamily.

It localises to the cytoplasm. Functionally, one of the essential components for the initiation of protein synthesis. Protects formylmethionyl-tRNA from spontaneous hydrolysis and promotes its binding to the 30S ribosomal subunits. Also involved in the hydrolysis of GTP during the formation of the 70S ribosomal complex. This Pelodictyon phaeoclathratiforme (strain DSM 5477 / BU-1) protein is Translation initiation factor IF-2.